We begin with the raw amino-acid sequence, 573 residues long: Sulfite reductase [NADPH] hemoprotein beta-component (573 aa).

Residues 1-20 are disordered; that stretch reads MAKVELKAPDGPPSDVERIK. 4 residues coordinate [4Fe-4S] cluster: C438, C444, C483, and C487. C487 provides a ligand contact to siroheme.

It belongs to the nitrite and sulfite reductase 4Fe-4S domain family. As to quaternary structure, alpha(8)-beta(8). The alpha component is a flavoprotein, the beta component is a hemoprotein. Siroheme serves as cofactor. [4Fe-4S] cluster is required as a cofactor.

The enzyme catalyses hydrogen sulfide + 3 NADP(+) + 3 H2O = sulfite + 3 NADPH + 4 H(+). The protein operates within sulfur metabolism; hydrogen sulfide biosynthesis; hydrogen sulfide from sulfite (NADPH route): step 1/1. Its function is as follows. Component of the sulfite reductase complex that catalyzes the 6-electron reduction of sulfite to sulfide. This is one of several activities required for the biosynthesis of L-cysteine from sulfate. The protein is Sulfite reductase [NADPH] hemoprotein beta-component of Geobacillus kaustophilus (strain HTA426).